The primary structure comprises 1886 residues: Nuclear pore membrane glycoprotein 210 (1886 aa).

The signal sequence occupies residues Met1–Ala26. Topologically, residues Lys27–Gln1808 are perinuclear space. Residues Asn44, Asn337, Asn405, Asn484, Asn681, Asn801, Asn926, Asn1039, Asn1116, Asn1135, Asn1362, and Asn1441 are each glycosylated (N-linked (GlcNAc...) asparagine). Positions Phe1078 to Lys1151 constitute a BIG2 domain. A helical transmembrane segment spans residues Val1809–His1829. Residues Thr1830–His1886 are Cytoplasmic-facing. Residue Ser1839 is modified to Phosphoserine. Thr1844 bears the Phosphothreonine mark. Phosphoserine is present on residues Ser1873, Ser1876, Ser1880, and Ser1885.

It belongs to the NUP210 family. As to quaternary structure, forms dimers and possibly higher-order oligomers. Post-translationally, N-glycosylated, but not all potential glycosylation sites may be used. Contains high-mannose type oligosaccharides. In terms of processing, phosphorylated at Ser-1880 in mitosis specifically; not phosphorylated in interphase.

Its subcellular location is the nucleus. It localises to the nuclear pore complex. The protein localises to the nucleus membrane. It is found in the endoplasmic reticulum membrane. Its function is as follows. Nucleoporin essential for nuclear pore assembly and fusion, nuclear pore spacing, as well as structural integrity. The chain is Nuclear pore membrane glycoprotein 210 (Nup210) from Mus musculus (Mouse).